The chain runs to 294 residues: MGDYIVKATAYEDNVLAFAALSKDTVNRAKEIHSLTPTACAALGRSLTAVAMMRTMMKGEKDKVTLVIKGDGPIGSIVVVSNFPGIVKGYVGNPFVDLPLSEKGKLDVGRAVGKKGYVTVIKDIGLKEPYIGTVEIQTGEIGDDIAYYFYTSEQIPSAVGLGVLVGKEGDVLTAGGFILQLLPDVKEEVILKLEKAIGQITSVTDLLRQGKTPEDILTSIFEEEEVKFLEKIPLKYECDCSQERFESAILALGKEEIQKLIKEEQGIETVCHFCGKKYFITRERLEELLKEAEN.

Cystine bridges form between Cys238–Cys240 and Cys271–Cys274.

The protein belongs to the HSP33 family. Under oxidizing conditions two disulfide bonds are formed involving the reactive cysteines. Under reducing conditions zinc is bound to the reactive cysteines and the protein is inactive.

It is found in the cytoplasm. Functionally, redox regulated molecular chaperone. Protects both thermally unfolding and oxidatively damaged proteins from irreversible aggregation. Plays an important role in the bacterial defense system toward oxidative stress. The polypeptide is 33 kDa chaperonin (Caldanaerobacter subterraneus subsp. tengcongensis (strain DSM 15242 / JCM 11007 / NBRC 100824 / MB4) (Thermoanaerobacter tengcongensis)).